A 144-amino-acid polypeptide reads, in one-letter code: Large ribosomal subunit protein uL15 (144 aa).

Residues 1-12 (MRLNTLSPSLGS) are compositionally biased toward polar residues. Residues 1–51 (MRLNTLSPSLGSRKNHKRLGRGIGSGFGKTAGRGHKGQKSRSGGHVNRGFE) are disordered. Positions 21–31 (RGIGSGFGKTA) are enriched in gly residues.

This sequence belongs to the universal ribosomal protein uL15 family. Part of the 50S ribosomal subunit.

Functionally, binds to the 23S rRNA. The chain is Large ribosomal subunit protein uL15 from Buchnera aphidicola subsp. Schizaphis graminum (strain Sg).